A 134-amino-acid polypeptide reads, in one-letter code: Protein NrdI (134 aa).

Belongs to the NrdI family.

Its function is as follows. Probably involved in ribonucleotide reductase function. The chain is Protein NrdI from Rhizobium etli (strain CIAT 652).